Here is a 208-residue protein sequence, read N- to C-terminus: uncharacterized protein (208 aa).

This is an uncharacterized protein from Acidianus sp. F28 (AFV-2).